Consider the following 597-residue polypeptide: Elongation factor 4 (597 aa).

One can recognise a tr-type G domain in the interval 2 to 184; it reads KNIRNFSIIA…RLVRDIPAPE (183 aa). Residues 14 to 19 and 131 to 134 contribute to the GTP site; these read DHGKST and NKID.

It belongs to the TRAFAC class translation factor GTPase superfamily. Classic translation factor GTPase family. LepA subfamily.

Its subcellular location is the cell inner membrane. The catalysed reaction is GTP + H2O = GDP + phosphate + H(+). Its function is as follows. Required for accurate and efficient protein synthesis under certain stress conditions. May act as a fidelity factor of the translation reaction, by catalyzing a one-codon backward translocation of tRNAs on improperly translocated ribosomes. Back-translocation proceeds from a post-translocation (POST) complex to a pre-translocation (PRE) complex, thus giving elongation factor G a second chance to translocate the tRNAs correctly. Binds to ribosomes in a GTP-dependent manner. The sequence is that of Elongation factor 4 from Edwardsiella ictaluri (strain 93-146).